The sequence spans 237 residues: Phosphoribosylaminoimidazole-succinocarboxamide synthase (237 aa).

This sequence belongs to the SAICAR synthetase family.

It catalyses the reaction 5-amino-1-(5-phospho-D-ribosyl)imidazole-4-carboxylate + L-aspartate + ATP = (2S)-2-[5-amino-1-(5-phospho-beta-D-ribosyl)imidazole-4-carboxamido]succinate + ADP + phosphate + 2 H(+). Its pathway is purine metabolism; IMP biosynthesis via de novo pathway; 5-amino-1-(5-phospho-D-ribosyl)imidazole-4-carboxamide from 5-amino-1-(5-phospho-D-ribosyl)imidazole-4-carboxylate: step 1/2. This Escherichia coli O7:K1 (strain IAI39 / ExPEC) protein is Phosphoribosylaminoimidazole-succinocarboxamide synthase.